The sequence spans 903 residues: Centrobin (903 aa).

Residues M1–S10 are compositionally biased toward polar residues. A disordered region spans residues M1–V34. S80 bears the Phosphoserine mark. Disordered regions lie at residues L110 to S140, L471 to Q493, L568 to R597, S669 to A704, R772 to T799, and S837 to R903. Residues R196–H560 adopt a coiled-coil conformation. The segment at Q365 to R903 is required for centrosome localization. The segment covering L572–Q590 has biased composition (pro residues). A compositionally biased stretch (basic and acidic residues) spans H675–P685. The segment covering S778–P791 has biased composition (low complexity). S790 is subject to Phosphoserine. The segment covering S837–I863 has biased composition (basic and acidic residues).

As to quaternary structure, interacts with LYST. In terms of tissue distribution, widely expressed (at protein level). Highly expressed in testis. Also expressed in spleen, thymus, prostate, small intestine, colon and peripheral blood leukocytes.

It is found in the cytoplasm. The protein localises to the cytoskeleton. Its subcellular location is the microtubule organizing center. It localises to the centrosome. The protein resides in the centriole. In terms of biological role, required for centriole duplication. Inhibition of centriole duplication leading to defects in cytokinesis. The sequence is that of Centrobin (CNTROB) from Homo sapiens (Human).